Consider the following 491-residue polypeptide: Putative mannan endo-1,4-beta-mannosidase 5 (491 aa).

Positions 1–31 (METSYREEEARRKASLLHCIFFFLLGALAMA) are cleaved as a signal peptide. Substrate contacts are provided by W134 and N248. The Proton donor role is filled by E249. Residue Y330 participates in substrate binding. E372 functions as the Nucleophile in the catalytic mechanism. N-linked (GlcNAc...) asparagine glycosylation is present at N385. W416 contributes to the substrate binding site. Residue N471 is glycosylated (N-linked (GlcNAc...) asparagine).

The protein belongs to the glycosyl hydrolase 5 (cellulase A) family. Expression not detected.

It is found in the secreted. It carries out the reaction Random hydrolysis of (1-&gt;4)-beta-D-mannosidic linkages in mannans, galactomannans and glucomannans.. This is Putative mannan endo-1,4-beta-mannosidase 5 (MAN5) from Oryza sativa subsp. japonica (Rice).